We begin with the raw amino-acid sequence, 160 residues long: Ribosome maturation factor RimP (160 aa).

Belongs to the RimP family.

Its subcellular location is the cytoplasm. In terms of biological role, required for maturation of 30S ribosomal subunits. The polypeptide is Ribosome maturation factor RimP (Geobacter sp. (strain M21)).